Consider the following 512-residue polypeptide: MSSNSQEDNNKTTEKKNTLTVIDNRTGKSYEIPINHETVKSIDFRAIKEQSIDFGTMIYDPGYYNTAVCKSQITYIDGDRGILEYRGYPIEQLAEKSSFLEVSYLLIYGDLPSKEQSNLWNTKIMNHTFIHENLISMMKSFRYDAHPMGMLISSLSAMSTFYPEANPALAGVDIYKNKQLMNKQIFRILGKLPTIAACAYRHRIGRPYNDPSNTLSYTENFLYMLDRLSESNYKPHPVLTRALDKLFIIHADHELNCSTATMRQIASTLVDPYTACAGSAGALYGPLHGGANEAVLRMLEAIGTIENIPKFIEQVKQKKQRLMGFGHRVYKSYDPRAKILKTVTMEIFALLGKNPLMQIATELERLALSDSYFIERQLYPNVDFYSGIIYKSMGFPTDMFPVLFSIPRAAGWLAHWVEELADPELRIFRPRQIYMGRRNMNYVPMDARQVQQHNSGEKLSSFSSGFDRRRDVSEELFNFEDGAIPKTATGSKSQLSASIEQSFGEKISPQSH.

Catalysis depends on residues His-288, His-327, and Asp-383. Residues 483–512 (AIPKTATGSKSQLSASIEQSFGEKISPQSH) form a disordered region. Positions 488 to 501 (ATGSKSQLSASIEQ) are enriched in polar residues.

This sequence belongs to the citrate synthase family.

It localises to the cytoplasm. It carries out the reaction oxaloacetate + acetyl-CoA + H2O = citrate + CoA + H(+). Its pathway is carbohydrate metabolism; tricarboxylic acid cycle; isocitrate from oxaloacetate: step 1/2. The chain is Citrate synthase (gltA) from Dictyostelium discoideum (Social amoeba).